A 75-amino-acid polypeptide reads, in one-letter code: Putative membrane protein insertion efficiency factor (75 aa).

It belongs to the UPF0161 family.

It localises to the cell membrane. Functionally, could be involved in insertion of integral membrane proteins into the membrane. This is Putative membrane protein insertion efficiency factor from Halalkalibacterium halodurans (strain ATCC BAA-125 / DSM 18197 / FERM 7344 / JCM 9153 / C-125) (Bacillus halodurans).